A 98-amino-acid chain; its full sequence is Acylphosphatase (98 aa).

One can recognise an Acylphosphatase-like domain in the interval T12–H98. Active-site residues include R27 and N45.

It belongs to the acylphosphatase family.

The enzyme catalyses an acyl phosphate + H2O = a carboxylate + phosphate + H(+). This Burkholderia thailandensis (strain ATCC 700388 / DSM 13276 / CCUG 48851 / CIP 106301 / E264) protein is Acylphosphatase (acyP).